The following is a 581-amino-acid chain: MAIDFSQYQTPGVYTEAVGAPQLGIRSSVPTAVAIFGTAVGYQTYRESIRINPDTGETITTQILALVGEPTGGSFKLSLAGEPTGNIPFNATQGQVQSALRALPNVEDDEVTVLGDPGGPWTVTFTKAVAALTKDVTGLTGGDNPDLNIASEQTGVPAMNRALAKKGIKTDTIRVVNPNSGQVYVLGTDYVVTRVNAGEDGEANTRDDLYTIQRVVDGGHIDPGDIVQLSYRYTDPNYHEVIRFTDPDDIQDFYGPAFDEAGNVQSEITLCAQLAITNGASTILACAVDPEGDTVTMGDYQNALNKFRDEDEIAIIVAGTGAQPIQALVQQHVSAQSNNKYERRAILGMDGSVTPVPSATRIANAQSIKDQRVALISPSSFVYYAPELNREVVLGGQFMAAAVAGKSVSAIAAMPLTRKVIRGFSGPAEVQRDGEKSRESSEGLMVIEKTPRNLVHVRHGVTTDPTSLHTREWNIIGQQDVMVYRIRDYLDADGLIGMPIYDTTIVQVKASAEAALVWLVDNNIIRGYRNLKARQIERQPDVIEVRYEWRPAYPLNYIVVRYSIAPETGDITSTIEGTTSF.

The protein belongs to the myoviridae tail sheath protein family. In terms of assembly, homomultimer.

It localises to the virion. It is found in the host cytoplasm. Polymerizes as an extended structure around the baseplate-tail tube complex. During ejection, the sheath shifts to a contracted form, thereby making the inner tail tube protrude through the host cell envelope. The sequence is that of Tail sheath protein from Mycobacterium phage Bxz1 (Mycobacteriophage Bxz1).